Consider the following 194-residue polypeptide: MDQEKVLKEFEKAGALLRGHFILSSGLHSPVFLQKALVFMNPQRTGRLCKALAEKIRQEVKGPIDAIVSPAVGGIIPGYETARYMKVPAMYVEREQGEFVLRRGFPLTKGMRVVMVEDIVTTGLSSRECIEAIGKTGAKVVAAACLIDRSGGKAKVGTKLISLARIAIPAYAPDKLPKELAALPAEKPGSRHIA.

Residue 117–125 (EDIVTTGLS) coordinates 5-phospho-alpha-D-ribose 1-diphosphate. Orotate contacts are provided by threonine 121 and arginine 149.

It belongs to the purine/pyrimidine phosphoribosyltransferase family. PyrE subfamily. As to quaternary structure, homodimer. Mg(2+) serves as cofactor.

It carries out the reaction orotidine 5'-phosphate + diphosphate = orotate + 5-phospho-alpha-D-ribose 1-diphosphate. Its pathway is pyrimidine metabolism; UMP biosynthesis via de novo pathway; UMP from orotate: step 1/2. Catalyzes the transfer of a ribosyl phosphate group from 5-phosphoribose 1-diphosphate to orotate, leading to the formation of orotidine monophosphate (OMP). The chain is Orotate phosphoribosyltransferase from Parvibaculum lavamentivorans (strain DS-1 / DSM 13023 / NCIMB 13966).